The chain runs to 670 residues: DNA ligase (670 aa).

NAD(+)-binding positions include 32–36 (DAEYD), 81–82 (SL), and E113. K115 (N6-AMP-lysine intermediate) is an active-site residue. 4 residues coordinate NAD(+): R136, E173, K290, and K314. Residues C408, C411, C426, and C432 each coordinate Zn(2+). In terms of domain architecture, BRCT spans 592-670 (EIDSPFAGKT…EAEMIRLLGE (79 aa)).

It belongs to the NAD-dependent DNA ligase family. LigA subfamily. Mg(2+) is required as a cofactor. Mn(2+) serves as cofactor.

The catalysed reaction is NAD(+) + (deoxyribonucleotide)n-3'-hydroxyl + 5'-phospho-(deoxyribonucleotide)m = (deoxyribonucleotide)n+m + AMP + beta-nicotinamide D-nucleotide.. DNA ligase that catalyzes the formation of phosphodiester linkages between 5'-phosphoryl and 3'-hydroxyl groups in double-stranded DNA using NAD as a coenzyme and as the energy source for the reaction. It is essential for DNA replication and repair of damaged DNA. The chain is DNA ligase from Yersinia pseudotuberculosis serotype IB (strain PB1/+).